The primary structure comprises 413 residues: UPF0754 membrane protein PCC7424_0748 (413 aa).

Transmembrane regions (helical) follow at residues 3–23 (IALE…GAII) and 391–411 (IVNL…VILL).

The protein belongs to the UPF0754 family.

It localises to the cell inner membrane. This chain is UPF0754 membrane protein PCC7424_0748, found in Gloeothece citriformis (strain PCC 7424) (Cyanothece sp. (strain PCC 7424)).